A 194-amino-acid polypeptide reads, in one-letter code: Putative lipoprotein LppK (194 aa).

Residues Met1–Gly26 form the signal peptide. Residue Cys27 is the site of N-palmitoyl cysteine attachment. Residue Cys27 is the site of S-diacylglycerol cysteine attachment. The tract at residues Gly174–His194 is disordered. Residues Ile185 to His194 show a composition bias toward pro residues.

This sequence belongs to the MTB12 family.

Its subcellular location is the cell membrane. The protein is Putative lipoprotein LppK (lppK) of Mycobacterium leprae (strain TN).